A 97-amino-acid polypeptide reads, in one-letter code: UPF0235 protein PFL_5841 (97 aa).

This sequence belongs to the UPF0235 family.

This is UPF0235 protein PFL_5841 from Pseudomonas fluorescens (strain ATCC BAA-477 / NRRL B-23932 / Pf-5).